A 338-amino-acid polypeptide reads, in one-letter code: Lipoate-protein ligase A (338 aa).

Residues 29 to 216 (PATQRVLFLW…AFFAHYGERV (188 aa)) enclose the BPL/LPL catalytic domain. Residues arginine 71, 76–79 (GAVF), and lysine 134 each bind ATP. Lysine 134 contributes to the (R)-lipoate binding site.

It belongs to the LplA family. In terms of assembly, monomer.

Its subcellular location is the cytoplasm. It carries out the reaction L-lysyl-[lipoyl-carrier protein] + (R)-lipoate + ATP = N(6)-[(R)-lipoyl]-L-lysyl-[lipoyl-carrier protein] + AMP + diphosphate + H(+). Its pathway is protein modification; protein lipoylation via exogenous pathway; protein N(6)-(lipoyl)lysine from lipoate: step 1/2. The protein operates within protein modification; protein lipoylation via exogenous pathway; protein N(6)-(lipoyl)lysine from lipoate: step 2/2. Its function is as follows. Catalyzes both the ATP-dependent activation of exogenously supplied lipoate to lipoyl-AMP and the transfer of the activated lipoyl onto the lipoyl domains of lipoate-dependent enzymes. This is Lipoate-protein ligase A from Salmonella paratyphi B (strain ATCC BAA-1250 / SPB7).